Consider the following 440-residue polypeptide: D-serine dehydratase (440 aa).

K116 is subject to N6-(pyridoxal phosphate)lysine.

The protein belongs to the serine/threonine dehydratase family. DsdA subfamily. Monomer. Requires pyridoxal 5'-phosphate as cofactor.

The catalysed reaction is D-serine = pyruvate + NH4(+). The chain is D-serine dehydratase from Salmonella agona (strain SL483).